A 434-amino-acid polypeptide reads, in one-letter code: Trehalose-phosphatase (434 aa).

Mg(2+) is bound by residues D156 and D158. The active-site Proton donor/acceptor is D158. Residue 275-277 (QKK) participates in substrate binding. Residue D366 participates in Mg(2+) binding.

The protein belongs to the gob-1 trehalose phosphatase family. It depends on Mg(2+) as a cofactor.

It catalyses the reaction alpha,alpha-trehalose 6-phosphate + H2O = alpha,alpha-trehalose + phosphate. In terms of biological role, catalyzes the hydrolysis of trehalose 6-phosphate to trehalose and phosphate; prevents the accumulation of toxic levels of trehalose 6-phosphate. The polypeptide is Trehalose-phosphatase (gob-1) (Caenorhabditis briggsae).